A 276-amino-acid chain; its full sequence is Diaminopimelate epimerase (276 aa).

Positions 13, 46, and 66 each coordinate substrate. The active-site Proton donor is the cysteine 75. Substrate is bound by residues 76–77 (GN), asparagine 159, asparagine 192, and 210–211 (ER). Cysteine 219 acts as the Proton acceptor in catalysis. 220-221 (GT) serves as a coordination point for substrate.

The protein belongs to the diaminopimelate epimerase family. Homodimer.

Its subcellular location is the cytoplasm. The catalysed reaction is (2S,6S)-2,6-diaminopimelate = meso-2,6-diaminopimelate. The protein operates within amino-acid biosynthesis; L-lysine biosynthesis via DAP pathway; DL-2,6-diaminopimelate from LL-2,6-diaminopimelate: step 1/1. Catalyzes the stereoinversion of LL-2,6-diaminopimelate (L,L-DAP) to meso-diaminopimelate (meso-DAP), a precursor of L-lysine and an essential component of the bacterial peptidoglycan. The sequence is that of Diaminopimelate epimerase from Pseudomonas aeruginosa (strain LESB58).